A 132-amino-acid chain; its full sequence is L-ectoine synthase (132 aa).

The protein belongs to the ectoine synthase family.

The enzyme catalyses (2S)-4-acetamido-2-aminobutanoate = L-ectoine + H2O. It functions in the pathway amine and polyamine biosynthesis; ectoine biosynthesis; L-ectoine from L-aspartate 4-semialdehyde: step 3/3. In terms of biological role, catalyzes the circularization of gamma-N-acetyl-alpha,gamma-diaminobutyric acid (ADABA) to ectoine (1,4,5,6-tetrahydro-2-methyl-4-pyrimidine carboxylic acid), which is an excellent osmoprotectant. The polypeptide is L-ectoine synthase (Rhodococcus jostii (strain RHA1)).